We begin with the raw amino-acid sequence, 214 residues long: Large ribosomal subunit protein uL3 (214 aa).

Over residues 130–151 (FSSNRASHGNSRSHNTPGSIGQ) the composition is skewed to polar residues. Residues 130 to 163 (FSSNRASHGNSRSHNTPGSIGQAQDPGRVFPGKR) form a disordered region. Glutamine 153 bears the N5-methylglutamine mark.

It belongs to the universal ribosomal protein uL3 family. As to quaternary structure, part of the 50S ribosomal subunit. Forms a cluster with proteins L14 and L19. Post-translationally, methylated by PrmB.

Its function is as follows. One of the primary rRNA binding proteins, it binds directly near the 3'-end of the 23S rRNA, where it nucleates assembly of the 50S subunit. The protein is Large ribosomal subunit protein uL3 of Chromobacterium violaceum (strain ATCC 12472 / DSM 30191 / JCM 1249 / CCUG 213 / NBRC 12614 / NCIMB 9131 / NCTC 9757 / MK).